Consider the following 237-residue polypeptide: RNA-binding protein 38 (237 aa).

The interval 1–24 (MLLQPACSPSVFPRPSAAPSAMHG) is disordered. Residues 32–109 (TKIFVGGLPY…RKANVNLAYL (78 aa)) enclose the RRM domain.

The protein belongs to the RBM38 family. In terms of tissue distribution, expressed in cardiac and skeletal muscle tissues.

It localises to the cytoplasm. The protein resides in the cytosol. Its subcellular location is the nucleus. Functionally, RNA-binding protein that specifically bind the 3'-UTR of CDKN1A transcripts, leading to maintain the stability of CDKN1A transcripts, thereby acting as a mediator of the p53/TP53 family to regulate CDKN1A. CDKN1A is a cyclin-dependent kinase inhibitor transcriptionally regulated by the p53/TP53 family to induce cell cycle arrest. Has the ability to induce cell cycle arrest in G1 and maintain the stability of CDKN1A transcripts induced by p53/TP53. Also acts as a mRNA splicing factor. Specifically regulates the expression of FGFR2-IIIb, an epithelial cell-specific isoform of FGFR2. Plays a role in myogenic differentiation. The chain is RNA-binding protein 38 (Rbm38) from Mus musculus (Mouse).